Reading from the N-terminus, the 148-residue chain is MRTTFLAKPGEIERKWYVVDATDIPLGRLSSVVASILRGKNKPQFTPNVDTGDNVIIINASKLKLTGKKASDKIYYHHSQHPGGLKHEIAGDLLRDNPARLVEYSVKKMLPTKNTLGHQQFLKLHVYAGEEHPHLAQKPEVLDISNLI.

It belongs to the universal ribosomal protein uL13 family. In terms of assembly, part of the 50S ribosomal subunit.

Its function is as follows. This protein is one of the early assembly proteins of the 50S ribosomal subunit, although it is not seen to bind rRNA by itself. It is important during the early stages of 50S assembly. This Lacticaseibacillus casei (strain BL23) (Lactobacillus casei) protein is Large ribosomal subunit protein uL13.